The chain runs to 254 residues: Imidazole glycerol phosphate synthase subunit HisF (254 aa).

Catalysis depends on residues D11 and D130.

This sequence belongs to the HisA/HisF family. As to quaternary structure, heterodimer of HisH and HisF.

It is found in the cytoplasm. The catalysed reaction is 5-[(5-phospho-1-deoxy-D-ribulos-1-ylimino)methylamino]-1-(5-phospho-beta-D-ribosyl)imidazole-4-carboxamide + L-glutamine = D-erythro-1-(imidazol-4-yl)glycerol 3-phosphate + 5-amino-1-(5-phospho-beta-D-ribosyl)imidazole-4-carboxamide + L-glutamate + H(+). It participates in amino-acid biosynthesis; L-histidine biosynthesis; L-histidine from 5-phospho-alpha-D-ribose 1-diphosphate: step 5/9. In terms of biological role, IGPS catalyzes the conversion of PRFAR and glutamine to IGP, AICAR and glutamate. The HisF subunit catalyzes the cyclization activity that produces IGP and AICAR from PRFAR using the ammonia provided by the HisH subunit. The polypeptide is Imidazole glycerol phosphate synthase subunit HisF (Microcystis aeruginosa (strain NIES-843 / IAM M-2473)).